Reading from the N-terminus, the 273-residue chain is Urease accessory protein UreD (273 aa).

It belongs to the UreD family. As to quaternary structure, ureD, UreF and UreG form a complex that acts as a GTP-hydrolysis-dependent molecular chaperone, activating the urease apoprotein by helping to assemble the nickel containing metallocenter of UreC. The UreE protein probably delivers the nickel.

It is found in the cytoplasm. In terms of biological role, required for maturation of urease via the functional incorporation of the urease nickel metallocenter. This chain is Urease accessory protein UreD, found in Rhizobium etli (strain ATCC 51251 / DSM 11541 / JCM 21823 / NBRC 15573 / CFN 42).